Here is a 79-residue protein sequence, read N- to C-terminus: Sec-independent protein translocase protein TatA (79 aa).

A helical transmembrane segment spans residues Met-1–Gly-21. The segment at Met-43–Ala-79 is disordered. Residues Glu-46–Ala-57 are compositionally biased toward basic and acidic residues. The segment covering Ala-58 to Ala-67 has biased composition (low complexity). Positions Thr-68–Ala-79 are enriched in basic and acidic residues.

This sequence belongs to the TatA/E family. In terms of assembly, the Tat system comprises two distinct complexes: a TatABC complex, containing multiple copies of TatA, TatB and TatC subunits, and a separate TatA complex, containing only TatA subunits. Substrates initially bind to the TatABC complex, which probably triggers association of the separate TatA complex to form the active translocon.

It localises to the cell inner membrane. Functionally, part of the twin-arginine translocation (Tat) system that transports large folded proteins containing a characteristic twin-arginine motif in their signal peptide across membranes. TatA could form the protein-conducting channel of the Tat system. The polypeptide is Sec-independent protein translocase protein TatA (Shewanella baltica (strain OS223)).